We begin with the raw amino-acid sequence, 334 residues long: Protein-methionine-sulfoxide reductase catalytic subunit MsrP (334 aa).

Residues 1-44 (MKKNQFLKESDVTAESVFFMKRRQVLKALGISAAALSLPHAAHA) constitute a signal peptide (tat-type signal). Mo-molybdopterin-binding positions include Asn-88, 91 to 92 (YE), Cys-146, Thr-181, Asn-233, Arg-238, and 249 to 251 (GIK).

It belongs to the MsrP family. Heterodimer of a catalytic subunit (MsrP) and a heme-binding subunit (MsrQ). Requires Mo-molybdopterin as cofactor. In terms of processing, predicted to be exported by the Tat system. The position of the signal peptide cleavage has not been experimentally proven.

It is found in the periplasm. The enzyme catalyses L-methionyl-[protein] + a quinone + H2O = L-methionyl-(S)-S-oxide-[protein] + a quinol. It carries out the reaction L-methionyl-[protein] + a quinone + H2O = L-methionyl-(R)-S-oxide-[protein] + a quinol. In terms of biological role, part of the MsrPQ system that repairs oxidized periplasmic proteins containing methionine sulfoxide residues (Met-O), using respiratory chain electrons. Thus protects these proteins from oxidative-stress damage caused by reactive species of oxygen and chlorine generated by the host defense mechanisms. MsrPQ is essential for the maintenance of envelope integrity under bleach stress, rescuing a wide series of structurally unrelated periplasmic proteins from methionine oxidation, including the primary periplasmic chaperone SurA and the lipoprotein Pal. The catalytic subunit MsrP is non-stereospecific, being able to reduce both (R-) and (S-) diastereoisomers of methionine sulfoxide. The polypeptide is Protein-methionine-sulfoxide reductase catalytic subunit MsrP (Shigella boydii serotype 18 (strain CDC 3083-94 / BS512)).